A 545-amino-acid chain; its full sequence is Methionine--tRNA ligase (545 aa).

The 'HIGH' region motif lies at 15–25; the sequence is PYANGPIHLGH. Zn(2+) is bound by residues C146, C149, C159, and C162. The 'KMSKS' region signature appears at 332-336; sequence KMSKS. K335 provides a ligand contact to ATP.

The protein belongs to the class-I aminoacyl-tRNA synthetase family. MetG type 1 subfamily. Monomer. The cofactor is Zn(2+).

It is found in the cytoplasm. The enzyme catalyses tRNA(Met) + L-methionine + ATP = L-methionyl-tRNA(Met) + AMP + diphosphate. Functionally, is required not only for elongation of protein synthesis but also for the initiation of all mRNA translation through initiator tRNA(fMet) aminoacylation. The sequence is that of Methionine--tRNA ligase from Hamiltonella defensa subsp. Acyrthosiphon pisum (strain 5AT).